The sequence spans 127 residues: Fluoride-specific ion channel FluC (127 aa).

4 helical membrane-spanning segments follow: residues 4 to 24 (FTLL…RYLI), 35 to 55 (GFPY…GILM), 71 to 91 (IIGL…MDNV), and 99 to 119 (FIKA…ACFI). Na(+)-binding residues include glycine 78 and threonine 81.

It belongs to the fluoride channel Fluc/FEX (TC 1.A.43) family.

It localises to the cell inner membrane. The enzyme catalyses fluoride(in) = fluoride(out). With respect to regulation, na(+) is not transported, but it plays an essential structural role and its presence is essential for fluoride channel function. Its function is as follows. Fluoride-specific ion channel. Important for reducing fluoride concentration in the cell, thus reducing its toxicity. The polypeptide is Fluoride-specific ion channel FluC (Photobacterium profundum (strain SS9)).